A 337-amino-acid polypeptide reads, in one-letter code: Glyceraldehyde-3-phosphate dehydrogenase (337 aa).

Residues 11–12, Asp-33, and Lys-78 contribute to the NAD(+) site; that span reads RI. D-glyceraldehyde 3-phosphate is bound by residues 149–151, Thr-180, 209–210, and Arg-232; these read SCT and TG. Residue Cys-150 is the Nucleophile of the active site. NAD(+) is bound at residue Asn-314.

Belongs to the glyceraldehyde-3-phosphate dehydrogenase family. As to quaternary structure, homotetramer.

It localises to the cytoplasm. It catalyses the reaction D-glyceraldehyde 3-phosphate + phosphate + NAD(+) = (2R)-3-phospho-glyceroyl phosphate + NADH + H(+). It functions in the pathway carbohydrate degradation; glycolysis; pyruvate from D-glyceraldehyde 3-phosphate: step 1/5. This is Glyceraldehyde-3-phosphate dehydrogenase (GPD) from Lyophyllum shimeji (Hon-shimeji).